Here is a 313-residue protein sequence, read N- to C-terminus: Protein FixB (313 aa).

255 to 283 (LYLAVGISGQIQHMVGANASQTIFAINKD) provides a ligand contact to FAD.

The protein belongs to the ETF alpha-subunit/FixB family. Heterodimer of FixA and FixB.

The protein operates within amine and polyamine metabolism; carnitine metabolism. Functionally, required for anaerobic carnitine reduction. May bring reductant to CaiA. The protein is Protein FixB of Escherichia coli O157:H7.